The primary structure comprises 100 residues: ATP synthase subunit c (100 aa).

2 helical membrane passes run 27 to 47 and 72 to 92; these read SVIA…IGMG and FIAL…TLIV.

Belongs to the ATPase C chain family. F-type ATPases have 2 components, F(1) - the catalytic core - and F(0) - the membrane proton channel. F(1) has five subunits: alpha(3), beta(3), gamma(1), delta(1), epsilon(1). F(0) has three main subunits: a(1), b(2) and c(10-14). The alpha and beta chains form an alternating ring which encloses part of the gamma chain. F(1) is attached to F(0) by a central stalk formed by the gamma and epsilon chains, while a peripheral stalk is formed by the delta and b chains.

It localises to the cell inner membrane. Its function is as follows. F(1)F(0) ATP synthase produces ATP from ADP in the presence of a proton or sodium gradient. F-type ATPases consist of two structural domains, F(1) containing the extramembraneous catalytic core and F(0) containing the membrane proton channel, linked together by a central stalk and a peripheral stalk. During catalysis, ATP synthesis in the catalytic domain of F(1) is coupled via a rotary mechanism of the central stalk subunits to proton translocation. Key component of the F(0) channel; it plays a direct role in translocation across the membrane. A homomeric c-ring of between 10-14 subunits forms the central stalk rotor element with the F(1) delta and epsilon subunits. In Campylobacter concisus (strain 13826), this protein is ATP synthase subunit c.